We begin with the raw amino-acid sequence, 282 residues long: Energy-coupling factor transporter ATP-binding protein EcfA1 (282 aa).

An ABC transporter domain is found at 6 to 243 (ISFDHVTFTY…VEMLKRIGLD (238 aa)). 40-47 (GHNGSGKS) is a binding site for ATP.

The protein belongs to the ABC transporter superfamily. Energy-coupling factor EcfA family. As to quaternary structure, forms a stable energy-coupling factor (ECF) transporter complex composed of 2 membrane-embedded substrate-binding proteins (S component), 2 ATP-binding proteins (A component) and 2 transmembrane proteins (T component).

The protein resides in the cell membrane. In terms of biological role, ATP-binding (A) component of a common energy-coupling factor (ECF) ABC-transporter complex. Unlike classic ABC transporters this ECF transporter provides the energy necessary to transport a number of different substrates. The polypeptide is Energy-coupling factor transporter ATP-binding protein EcfA1 (Lactobacillus delbrueckii subsp. bulgaricus (strain ATCC 11842 / DSM 20081 / BCRC 10696 / JCM 1002 / NBRC 13953 / NCIMB 11778 / NCTC 12712 / WDCM 00102 / Lb 14)).